Here is a 175-residue protein sequence, read N- to C-terminus: Pathogenesis-related protein 1A1 (175 aa).

A signal peptide spans 1-21 (MKSSIFVACFITFIIFHSSQA). Residues 29-146 (LNAHNAARRR…SGWVFITCNY (118 aa)) form the SCP domain. Disulfide bonds link C65–C135, C108–C114, and C130–C144.

It belongs to the CRISP family.

In terms of biological role, probably involved in the defense reaction of plants against pathogens. The polypeptide is Pathogenesis-related protein 1A1 (Solanum lycopersicum (Tomato)).